The primary structure comprises 1371 residues: F-actin-uncapping protein LRRC16A (1371 aa).

Methionine 1 carries the N-acetylmethionine modification. Serine 122 carries the phosphoserine modification. LRR repeat units lie at residues 245–269 (SNRL…LASA), 275–298 (NSGL…SLSI), 304–327 (PKGL…SLSQ), 336–363 (ASTL…FLAQ), 391–418 (LQYL…SFKQ), 423–447 (SLAL…LLLG), 481–506 (IHNI…VWLS), 543–566 (ESPL…IINA), 570–593 (NTSL…MLAK), and 654–678 (LQKI…AYRL). A coiled-coil region spans residues 710–734 (GDAIQEDLKSAERLMRDAKNSKTLL). A Phosphothreonine modification is found at threonine 916. Disordered regions lie at residues 957-1000 (PFPS…QPTQ), 1036-1159 (KMDS…RRYG), and 1172-1371 (KAKQ…FIFV). Residues 958-981 (FPSLRQEKRSSGFISELPSEEGKK) form an LRR 11 repeat. Positions 958–1082 (FPSLRQEKRS…LIKSRSKSER (125 aa)) are inhibits capping activity of CAPZA2. Position 968 is a phosphoserine (serine 968). Composition is skewed to basic and acidic residues over residues 977–986 (EEGKKLEHFT) and 1036–1061 (KMDS…EKKK). The segment at 1055–1089 (GGDEKKKRDSRKSSGFLNLIKSRSKSERPPTILMT) is necessary for localization at the cell membrane. 2 positions are modified to phosphoserine: serine 1067 and serine 1094. Basic and acidic residues-rich tracts occupy residues 1106 to 1130 (CPRK…KTPD) and 1139 to 1148 (EIGKVERSDS). A compositionally biased stretch (polar residues) spans 1190–1199 (AVSQDSSSPA). Threonine 1228 is subject to Phosphothreonine. The span at 1231-1243 (KNTKAEPKAEAGS) shows a compositional bias: basic and acidic residues. The segment covering 1244–1265 (RSRSSSSTPTSPKPLLQSPKPS) has biased composition (low complexity). Serine 1280, serine 1288, serine 1291, serine 1315, serine 1324, and serine 1331 each carry phosphoserine. Positions 1313–1326 (QSSPQPSPRTFSQE) are enriched in polar residues. Residues 1340-1353 (QEQKQRSSSKDGHQ) show a composition bias toward basic and acidic residues. Serine 1360 is modified (phosphoserine).

Belongs to the CARMIL family. Homodimer. Interacts (via C-terminus) with heterodimer capping protein (CP); this interaction uncaps barbed ends capped by CP, enhances barbed-end actin polymerization and promotes lamellipodial formation and cell migration. Interacts with heterodimer capping protein (CP). Interacts with MYO1E. Interacts with TRIO. In terms of tissue distribution, expressed in lung, placenta, small intestine, liver, thymus, colon, skeletal muscle, heart and brain. Higher expression in kidney.

It is found in the cytoplasm. The protein resides in the cytoskeleton. The protein localises to the cell membrane. Its subcellular location is the cell projection. It localises to the lamellipodium. Cell membrane-cytoskeleton-associated protein that plays a role in the regulation of actin polymerization at the barbed end of actin filaments. Prevents F-actin heterodimeric capping protein (CP) activity at the leading edges of migrating cells, and hence generates uncapped barbed ends and enhances actin polymerization, however, seems unable to nucleate filaments. Plays a role in lamellipodial protrusion formations and cell migration. The protein is F-actin-uncapping protein LRRC16A of Homo sapiens (Human).